The following is a 477-amino-acid chain: Aspartyl/glutamyl-tRNA(Asn/Gln) amidotransferase subunit B (477 aa).

The protein belongs to the GatB/GatE family. GatB subfamily. As to quaternary structure, heterotrimer of A, B and C subunits.

It carries out the reaction L-glutamyl-tRNA(Gln) + L-glutamine + ATP + H2O = L-glutaminyl-tRNA(Gln) + L-glutamate + ADP + phosphate + H(+). The catalysed reaction is L-aspartyl-tRNA(Asn) + L-glutamine + ATP + H2O = L-asparaginyl-tRNA(Asn) + L-glutamate + ADP + phosphate + 2 H(+). In terms of biological role, allows the formation of correctly charged Asn-tRNA(Asn) or Gln-tRNA(Gln) through the transamidation of misacylated Asp-tRNA(Asn) or Glu-tRNA(Gln) in organisms which lack either or both of asparaginyl-tRNA or glutaminyl-tRNA synthetases. The reaction takes place in the presence of glutamine and ATP through an activated phospho-Asp-tRNA(Asn) or phospho-Glu-tRNA(Gln). This chain is Aspartyl/glutamyl-tRNA(Asn/Gln) amidotransferase subunit B, found in Ureaplasma urealyticum serovar 10 (strain ATCC 33699 / Western).